The primary structure comprises 250 residues: Probable transcriptional regulatory protein Cag_0165 (250 aa).

The protein belongs to the TACO1 family.

It is found in the cytoplasm. The sequence is that of Probable transcriptional regulatory protein Cag_0165 from Chlorobium chlorochromatii (strain CaD3).